The sequence spans 143 residues: Ribonuclease HI (143 aa).

An RNase H type-1 domain is found at 1–136 (MQEIEIFCDG…CDSLAKLEAQ (136 aa)). Mg(2+) is bound by residues Asp-9, Glu-47, Asp-69, and Asp-128.

It belongs to the RNase H family. As to quaternary structure, monomer. It depends on Mg(2+) as a cofactor.

The protein localises to the cytoplasm. It carries out the reaction Endonucleolytic cleavage to 5'-phosphomonoester.. In terms of biological role, endonuclease that specifically degrades the RNA of RNA-DNA hybrids. The polypeptide is Ribonuclease HI (rnhA) (Helicobacter pylori (strain ATCC 700392 / 26695) (Campylobacter pylori)).